We begin with the raw amino-acid sequence, 316 residues long: uncharacterized protein (316 aa).

The protein belongs to the chlamydial CPn_0441/CT_007/TC_0275 family.

This is an uncharacterized protein from Chlamydia pneumoniae (Chlamydophila pneumoniae).